The sequence spans 499 residues: Cytochrome P450 705A12 (499 aa).

A helical membrane pass occupies residues 4 to 24 (LIIVDFQNISIFILLCLFSFL). Cys439 contacts heme.

The protein belongs to the cytochrome P450 family. Heme is required as a cofactor.

It is found in the membrane. Functionally, may be involved in hydroxylation of the triterpene marneral. The protein is Cytochrome P450 705A12 of Arabidopsis thaliana (Mouse-ear cress).